Reading from the N-terminus, the 474-residue chain is Aspartate ammonia-lyase (474 aa).

L-aspartate-binding residues include Thr105, Ser144, Thr145, Asn146, and Thr191. The SS loop stretch occupies residues 322–331; the sequence is GSSIMPGKVN. The active-site Proton acceptor is the Ser323. L-aspartate-binding residues include Ser324 and Lys329.

The protein belongs to the class-II fumarase/aspartase family. Aspartase subfamily. Homotetramer.

It catalyses the reaction L-aspartate = fumarate + NH4(+). Functionally, lyase involved in the degradation of canavanine, the delta-oxa-analog of arginine, allowing growth on canavanine as sole nitrogen and carbon source. Probably catalyzes the conversion of L-aspartate to fumarate and ammonia. The protein is Aspartate ammonia-lyase of Pseudomonas canavaninivorans.